The chain runs to 493 residues: Leucine-rich repeat-containing protein 14 (493 aa).

Residues 111–146 (KHALRVLDMTGLLDDGVEQDPGTMSMWDCTAAVART) form an LRR 1; degenerate repeat. The LRR 2; degenerate repeat unit spans residues 194-218 (RLCCRDLRAEDLPMRNTVALLQLLD). The LRR 3; degenerate repeat unit spans residues 219 to 246 (AGCLRRVDLRFNNLGLRGLSVIIPHVAR). Residues 247 to 282 (FQHLASLRLHYVHGDSRQPSVDGEDNFRYFLAQMGR) form an LRR 4; degenerate repeat. 5 LRR repeats span residues 283-307 (FTCL…LSTL), 308-339 (QSPL…AHLK), 340-360 (KLDL…QGLL), 364-391 (AATL…ILTQ), and 392-416 (CASL…LLRD).

Belongs to the PRAME family. LRRC14 subfamily. In terms of assembly, interacts with IKBKB; disrupts IKBKB-IKBKG interaction preventing I-kappa-B-kinase (IKK) core complex formation and leading to a decrease of IKBKB phosphorylation and NF-kappaB activation. Interacts with CHUK.

It is found in the cytoplasm. Negatively regulates Toll-like receptor-mediated NF-kappa-B signaling by disrupting IKK core complex formation through interaction with IKBKB. This Homo sapiens (Human) protein is Leucine-rich repeat-containing protein 14.